Here is a 131-residue protein sequence, read N- to C-terminus: Small ribosomal subunit protein uS12 (131 aa).

The residue at position 89 (Asp-89) is a 3-methylthioaspartic acid. Residues 106 to 131 (GVDGRKQGRSKYGAKKAKVAKTASAK) are disordered. Residues 112-124 (QGRSKYGAKKAKV) show a composition bias toward basic residues.

It belongs to the universal ribosomal protein uS12 family. As to quaternary structure, part of the 30S ribosomal subunit. Contacts proteins S8 and S17. May interact with IF1 in the 30S initiation complex.

In terms of biological role, with S4 and S5 plays an important role in translational accuracy. Functionally, interacts with and stabilizes bases of the 16S rRNA that are involved in tRNA selection in the A site and with the mRNA backbone. Located at the interface of the 30S and 50S subunits, it traverses the body of the 30S subunit contacting proteins on the other side and probably holding the rRNA structure together. The combined cluster of proteins S8, S12 and S17 appears to hold together the shoulder and platform of the 30S subunit. The polypeptide is Small ribosomal subunit protein uS12 (Endomicrobium trichonymphae).